The chain runs to 215 residues: Ras-related protein Rab-5B (215 aa).

Serine 29, alanine 30, glycine 32, lysine 33, serine 34, serine 35, histidine 46, glutamate 47, threonine 52, glycine 78, asparagine 133, lysine 134, aspartate 136, alanine 164, and lysine 165 together coordinate GTP. A Mg(2+)-binding site is contributed by serine 34. 2 short sequence motifs (switch) span residues 44-56 (QFHE…IGAA) and 77-93 (AGQE…YRGA). Threonine 52 lines the Mg(2+) pocket. A disordered region spans residues 184 to 215 (SEPQSTSGAAGRSRGVDLHEQTQQNKSQCCSN). Over residues 204 to 215 (QTQQNKSQCCSN) the composition is skewed to polar residues. S-geranylgeranyl cysteine attachment occurs at residues cysteine 212 and cysteine 213.

Belongs to the small GTPase superfamily. Rab family. The cofactor is Mg(2+).

Its subcellular location is the cell membrane. The protein resides in the early endosome membrane. It catalyses the reaction GTP + H2O = GDP + phosphate + H(+). With respect to regulation, regulated by guanine nucleotide exchange factors (GEFs) which promote the exchange of bound GDP for free GTP. Regulated by GTPase activating proteins (GAPs) which increase the GTP hydrolysis activity. Inhibited by GDP dissociation inhibitors (GDIs). Its function is as follows. The small GTPases Rab are key regulators of intracellular membrane trafficking, from the formation of transport vesicles to their fusion with membranes. Rabs cycle between an inactive GDP-bound form and an active GTP-bound form that is able to recruit to membranes different sets of downstream effectors directly responsible for vesicle formation, movement, tethering and fusion. The polypeptide is Ras-related protein Rab-5B (RAB5B) (Gallus gallus (Chicken)).